The chain runs to 319 residues: Annexin A4 (319 aa).

Ala-2 bears the N-acetylalanine mark. Thr-7 carries the phosphothreonine; by PKC modification. Ser-12 carries the post-translational modification Phosphoserine. 4 Annexin repeats span residues 14–85 (FNAA…GMMT), 86–157 (PTVL…SLSA), 169–241 (ALVR…AIVK), and 245–316 (NKSA…ILCG). Lys-213, Lys-293, and Lys-300 each carry N6-acetyllysine.

The protein belongs to the annexin family. In terms of assembly, monomer.

The protein resides in the zymogen granule membrane. Its function is as follows. Calcium/phospholipid-binding protein which promotes membrane fusion and is involved in exocytosis. The protein is Annexin A4 (ANXA4) of Sus scrofa (Pig).